We begin with the raw amino-acid sequence, 324 residues long: Putative S-adenosyl-L-methionine-dependent methyltransferase MMAR_1059 (324 aa).

S-adenosyl-L-methionine contacts are provided by residues Asp-138 and 167-168 (DL).

Belongs to the UPF0677 family.

In terms of biological role, exhibits S-adenosyl-L-methionine-dependent methyltransferase activity. The protein is Putative S-adenosyl-L-methionine-dependent methyltransferase MMAR_1059 of Mycobacterium marinum (strain ATCC BAA-535 / M).